The following is a 592-amino-acid chain: Transmembrane 9 superfamily member 3 (592 aa).

The first 19 residues, 1 to 19 (MRLPTTLLLFIGALIFSGA), serve as a signal peptide directing secretion. The Lumenal portion of the chain corresponds to 20 to 229 (GTVRSDASDH…SLPHHLEIHW (210 aa)). The chain crosses the membrane as a helical span at residues 230 to 250 (FSIINSCVTVLLLTGFLATIL). Over 251–302 (MRVLKNDFMKYAQDEEAADDQEETGWKYIHGDVFRFPKNKSLFAASLGSGTQ) the chain is Cytoplasmic. A helical membrane pass occupies residues 303-323 (LFTLTIFIFMLSLVGVFYPYN). The Lumenal portion of the chain corresponds to 324–325 (RG). The chain crosses the membrane as a helical span at residues 326–346 (ALFTALVVIYALTSGIAGYTA). Topologically, residues 347–365 (SSFYCQLEGKNWVRNLLLT) are cytoplasmic. The helical transmembrane segment at 366 to 386 (GGLFCGPLFLTFCFLNTVAIA) threads the bilayer. Over 387–397 (YSATAALPFGT) the chain is Lumenal. The helical transmembrane segment at 398-418 (IIVIVLIWTLVTSPLLVLGGI) threads the bilayer. Topologically, residues 419–452 (AGKNSKAEFQAPVRTTKYPREIPPLPWYRSAVPQ) are cytoplasmic. The helical transmembrane segment at 453–473 (MAMAGFLPFSAIYIELYYIFA) threads the bilayer. At 474 to 485 (SVWGHRIYTIYS) the chain is on the lumenal side. The chain crosses the membrane as a helical span at residues 486–506 (ILFIVFIILLIVTAFITVALT). Over 507-521 (YFQLAAEDHEWWWRS) the chain is Cytoplasmic. The helical transmembrane segment at 522 to 542 (FLCGGSTGLFIYAYCLYYYYA) threads the bilayer. At 543-553 (RSDMSGFMQTS) the chain is on the lumenal side. A helical membrane pass occupies residues 554 to 574 (FFFGYMACICYGFFLMLGTVG). At 575 to 592 (FRAALLFVRHIYRSIKCE) the chain is on the cytoplasmic side. The Endoplasmic reticulum export signal signature appears at 581–586 (FVRHIY). The Golgi retention signal motif lies at 590 to 592 (KCE).

This sequence belongs to the nonaspanin (TM9SF) (TC 9.A.2) family.

Its subcellular location is the endosome membrane. It localises to the golgi apparatus membrane. This Arabidopsis thaliana (Mouse-ear cress) protein is Transmembrane 9 superfamily member 3.